Reading from the N-terminus, the 252-residue chain is NAP1-related protein 2 (252 aa).

A compositionally biased stretch (basic and acidic residues) spans 1–15; sequence MTAPADKGKKAKTDA. The tract at residues 1–23 is disordered; that stretch reads MTAPADKGKKAKTDADGGAAEEN. The stretch at 26–67 forms a coiled coil; it reads IDGALVLSIEKLQEIQDELEKVNEEASDKVLEVEQKYSEIRR. The tract at residues 222–252 is disordered; that stretch reads YFNNEAEELGEDDDEEGSDADEGEEDEEEEN. Positions 226-252 are enriched in acidic residues; the sequence is EAEELGEDDDEEGSDADEGEEDEEEEN.

The protein belongs to the nucleosome assembly protein (NAP) family.

Its subcellular location is the nucleus. The protein localises to the cytoplasm. In terms of biological role, acts as a histone H2A/H2B chaperone in nucleosome assembly. This chain is NAP1-related protein 2, found in Oryza sativa subsp. indica (Rice).